We begin with the raw amino-acid sequence, 331 residues long: Probable staphylococcal-like nuclease CAN1 (331 aa).

A lipid anchor (N-myristoyl glycine) is attached at Gly2. Residue Cys10 is the site of S-palmitoyl cysteine attachment. A TNase-like domain is found at His136–Ala313. Asp149 lines the Ca(2+) pocket. Arg220 is an active-site residue. Asp225 is a Ca(2+) binding site. Active-site residues include Glu228 and Arg262. A disordered region spans residues Gly306 to Ala331. Basic and acidic residues predominate over residues Lys318–Ala331.

The protein belongs to the thermonuclease family. Ca(2+) serves as cofactor.

It is found in the cell membrane. In terms of biological role, enzyme that catalyzes the hydrolysis of both DNA and RNA at the 5' position of the phosphodiester bond. This chain is Probable staphylococcal-like nuclease CAN1, found in Oryza sativa subsp. japonica (Rice).